Reading from the N-terminus, the 89-residue chain is Serine-rich and transmembrane domain-containing 2 (89 aa).

N11 is a glycosylation site (N-linked (GlcNAc...) asparagine). The chain crosses the membrane as a helical span at residues 38–58 (YVGLFLSLLAILLILLFTMLL).

It is found in the membrane. This Mus musculus (Mouse) protein is Serine-rich and transmembrane domain-containing 2.